Here is a 169-residue protein sequence, read N- to C-terminus: 3-hydroxyacyl-[acyl-carrier-protein] dehydratase FabZ (169 aa).

His66 is an active-site residue.

This sequence belongs to the thioester dehydratase family. FabZ subfamily.

Its subcellular location is the cytoplasm. It catalyses the reaction a (3R)-hydroxyacyl-[ACP] = a (2E)-enoyl-[ACP] + H2O. In terms of biological role, involved in unsaturated fatty acids biosynthesis. Catalyzes the dehydration of short chain beta-hydroxyacyl-ACPs and long chain saturated and unsaturated beta-hydroxyacyl-ACPs. The polypeptide is 3-hydroxyacyl-[acyl-carrier-protein] dehydratase FabZ (Helicobacter hepaticus (strain ATCC 51449 / 3B1)).